We begin with the raw amino-acid sequence, 337 residues long: AP2/ERF and B3 domain-containing transcription factor At1g50680 (337 aa).

The AP2/ERF DNA-binding region spans 27–84 (KYKGVVQQQNGHWGAQIYADHKRIWLGTFKSADEAATAYDSASIKLRSFDANSHRNFP). Positions 157–271 (FQKELTPSDV…VKTLEGQRKN (115 aa)) form a DNA-binding region, TF-B3.

The protein belongs to the AP2/ERF transcription factor family. RAV subfamily.

The protein localises to the nucleus. In terms of biological role, probably acts as a transcriptional activator. Binds to the GCC-box pathogenesis-related promoter element. May be involved in the regulation of gene expression by stress factors and by components of stress signal transduction pathways. This Arabidopsis thaliana (Mouse-ear cress) protein is AP2/ERF and B3 domain-containing transcription factor At1g50680.